The following is a 344-amino-acid chain: GTPase Obg (344 aa).

In terms of domain architecture, Obg spans 1 to 159 (MKFLDQAKVY…RWIWLRLKLI (159 aa)). Residues 160 to 327 (ADAGLVGLPN…ALRLLLSVVE (168 aa)) enclose the OBG-type G domain. Residues 166–173 (GLPNAGKS), 191–195 (FTTLH), 212–215 (DIPG), 279–282 (SKVD), and 308–310 (SAQ) each bind GTP. The Mg(2+) site is built by Ser-173 and Thr-193.

Belongs to the TRAFAC class OBG-HflX-like GTPase superfamily. OBG GTPase family. Monomer. Requires Mg(2+) as cofactor.

It localises to the cytoplasm. In terms of biological role, an essential GTPase which binds GTP, GDP and possibly (p)ppGpp with moderate affinity, with high nucleotide exchange rates and a fairly low GTP hydrolysis rate. Plays a role in control of the cell cycle, stress response, ribosome biogenesis and in those bacteria that undergo differentiation, in morphogenesis control. This Xanthobacter autotrophicus (strain ATCC BAA-1158 / Py2) protein is GTPase Obg.